The chain runs to 139 residues: Large ribosomal subunit protein uL13 (139 aa).

The protein belongs to the universal ribosomal protein uL13 family. In terms of assembly, part of the 50S ribosomal subunit.

Its function is as follows. This protein is one of the early assembly proteins of the 50S ribosomal subunit, although it is not seen to bind rRNA by itself. It is important during the early stages of 50S assembly. The polypeptide is Large ribosomal subunit protein uL13 (Methanococcoides burtonii (strain DSM 6242 / NBRC 107633 / OCM 468 / ACE-M)).